Consider the following 57-residue polypeptide: Potassium channel toxin alpha-KTx 26.1 (57 aa).

A signal peptide spans 1 to 22; that stretch reads MSRLFVFILIALFLSAIIDVMS. Cystine bridges form between Cys-30/Cys-48, Cys-34/Cys-53, and Cys-38/Cys-55.

The protein belongs to the short scorpion toxin superfamily. Potassium channel inhibitor family. Alpha-KTx 26 subfamily. As to expression, expressed by the venom gland.

The protein localises to the secreted. Functionally, recombinant toxin that reversibly inhibits the potassium current of mKv1.3/KCNA3 channel stably expressed in COS7 cells (IC(50)=150 nM). Also shows a weak inhibition on Kv1.2/KCNA2, Kv1.3/KCNA3 and TRPV1 channels. In Olivierus martensii (Manchurian scorpion), this protein is Potassium channel toxin alpha-KTx 26.1.